The following is a 314-amino-acid chain: E3 ubiquitin-protein ligase SINA-like 11 (314 aa).

Over residues 1 to 12 (MEDSNSHPQNQT) the composition is skewed to polar residues. Residues 1–31 (MEDSNSHPQNQTSKRKSSHPQKKQRMENETR) are disordered. Positions 13–23 (SKRKSSHPQKK) are enriched in basic residues. The RING-type; degenerate zinc finger occupies 43–81 (CPVCFEPLTIPTFQCDDGHIVCNFCFAKVSNKCPGPGCD). The segment at 95–280 (VLESAFVPCQ…PANEVQQVTI (186 aa)) is SBD. The segment at 98 to 156 (SAFVPCQNTEFGCTKSVSYEKVSSHEKECNYSQCSCPNLECNYTGSYNIIYGHFMRRHL) adopts an SIAH-type zinc-finger fold. Zn(2+)-binding residues include cysteine 103, cysteine 110, histidine 122, cysteine 126, cysteine 133, cysteine 138, histidine 150, and histidine 155.

The protein belongs to the SINA (Seven in absentia) family.

The catalysed reaction is S-ubiquitinyl-[E2 ubiquitin-conjugating enzyme]-L-cysteine + [acceptor protein]-L-lysine = [E2 ubiquitin-conjugating enzyme]-L-cysteine + N(6)-ubiquitinyl-[acceptor protein]-L-lysine.. The protein operates within protein modification; protein ubiquitination. Functionally, E3 ubiquitin-protein ligase that mediates ubiquitination and subsequent proteasomal degradation of target proteins. E3 ubiquitin ligases accept ubiquitin from an E2 ubiquitin-conjugating enzyme in the form of a thioester and then directly transfers the ubiquitin to targeted substrates. It probably triggers the ubiquitin-mediated degradation of different substrates. In Arabidopsis thaliana (Mouse-ear cress), this protein is E3 ubiquitin-protein ligase SINA-like 11.